The following is a 227-amino-acid chain: 2,3-bisphosphoglycerate-dependent phosphoglycerate mutase (227 aa).

Substrate is bound by residues 7-14 (RHGFSEWN), 20-21 (TG), Arg59, 86-89 (ERHY), Lys97, 113-114 (RR), and 182-183 (GN). Catalysis depends on His8, which acts as the Tele-phosphohistidine intermediate. The Proton donor/acceptor role is filled by Glu86.

This sequence belongs to the phosphoglycerate mutase family. BPG-dependent PGAM subfamily. Homodimer.

It carries out the reaction (2R)-2-phosphoglycerate = (2R)-3-phosphoglycerate. The protein operates within carbohydrate degradation; glycolysis; pyruvate from D-glyceraldehyde 3-phosphate: step 3/5. Its function is as follows. Catalyzes the interconversion of 2-phosphoglycerate and 3-phosphoglycerate. In Haemophilus influenzae (strain 86-028NP), this protein is 2,3-bisphosphoglycerate-dependent phosphoglycerate mutase.